A 153-amino-acid polypeptide reads, in one-letter code: S-ribosylhomocysteine lyase (153 aa).

Residues histidine 57, histidine 61, and cysteine 124 each contribute to the Fe cation site.

It belongs to the LuxS family. Homodimer. The cofactor is Fe cation.

It catalyses the reaction S-(5-deoxy-D-ribos-5-yl)-L-homocysteine = (S)-4,5-dihydroxypentane-2,3-dione + L-homocysteine. In terms of biological role, involved in the synthesis of autoinducer 2 (AI-2) which is secreted by bacteria and is used to communicate both the cell density and the metabolic potential of the environment. The regulation of gene expression in response to changes in cell density is called quorum sensing. Catalyzes the transformation of S-ribosylhomocysteine (RHC) to homocysteine (HC) and 4,5-dihydroxy-2,3-pentadione (DPD). This is S-ribosylhomocysteine lyase from Oceanobacillus iheyensis (strain DSM 14371 / CIP 107618 / JCM 11309 / KCTC 3954 / HTE831).